Here is a 557-residue protein sequence, read N- to C-terminus: Small ribosomal subunit protein bS1 (557 aa).

S1 motif domains follow at residues 21-87 (GSIV…LSRE), 105-171 (AETV…VSRR), 192-260 (GMEV…LGLK), and 277-347 (GTKL…LGLK). N6-acetyllysine is present on residues Lys-229, Lys-279, and Lys-363. S1 motif domains lie at 364-434 (GDRV…LGVK) and 451-520 (GAIV…LSVR).

Belongs to the bacterial ribosomal protein bS1 family. Part of the 30S ribosomal subunit. Some nascent polypeptide chains are able to cross-link to this protein in situ. Can be cross-linked to mRNA in the ribosome. Phosphorylated; probably on a serine.

Functionally, required for translation of most natural mRNAs except for leaderless mRNA. Binds mRNA upstream of the Shine-Dalgarno (SD) sequence and helps it bind to the 30S ribosomal subunit; acts as an RNA chaperone to unfold structured mRNA on the ribosome but is not essential for mRNAs with strong SDs and little 5'-UTR structure, thus it may help fine-tune which mRNAs that are translated. Unwinds dsRNA by binding to transiently formed ssRNA regions; binds about 10 nucleotides. Has a preference for polypyrimidine tracts. Negatively autoregulates its own translation. This Escherichia coli O157:H7 protein is Small ribosomal subunit protein bS1 (rpsA).